Consider the following 239-residue polypeptide: Transcriptional regulatory protein BtsR (239 aa).

The Response regulatory domain occupies 3-116; it reads KVLIVDDEPL…RLEKTLARLR (114 aa). 4-aspartylphosphate is present on D54. The region spanning 137-239 is the HTH LytTR-type domain; it reads IPCTGHSRIY…LKSLKEAIGL (103 aa).

Post-translationally, phosphorylated by BtsS.

Functionally, member of the two-component regulatory system BtsS/BtsR. BtsR regulates expression of btsT by binding to its promoter region. This is Transcriptional regulatory protein BtsR from Escherichia coli O6:H1 (strain CFT073 / ATCC 700928 / UPEC).